The sequence spans 91 residues: Protein LURE 1.6 (91 aa).

Positions 1-20 (MKLPFIFLITLLIFVSSCTS) are cleaved as a signal peptide. 3 disulfides stabilise this stretch: Cys59–Cys76, Cys62–Cys83, and Cys66–Cys85.

The protein belongs to the DEFL family. As to expression, expressed in the pistil. Detected in the synergid cells.

The protein resides in the secreted. Pollen tube attractants guiding pollen tubes to the ovular micropyle. In Arabidopsis thaliana (Mouse-ear cress), this protein is Protein LURE 1.6.